A 672-amino-acid polypeptide reads, in one-letter code: Spermatid perinuclear RNA-binding protein (672 aa).

The region spanning 5–363 (RSFANDDRHV…ALKRPFEDGL (359 aa)) is the DZF domain. 2 disordered regions span residues 52–73 (TNKG…GENY) and 349–371 (GAGS…DPNK). A compositionally biased stretch (basic and acidic residues) spans 357–371 (RPFEDGLGDDKDPNK). In terms of domain architecture, DRBM 1 spans 387 to 453 (DLMNALMRLN…AVKVLQAMGY (67 aa)). The segment covering 466–476 (SDEKSDNESKN) has biased composition (basic and acidic residues). A disordered region spans residues 466–499 (SDEKSDNESKNETVSSNSSNNTGNSTTETSSTLE). Low complexity predominate over residues 477–497 (ETVSSNSSNNTGNSTTETSST). The region spanning 510 to 576 (SGKNPVMELN…ALAALEKLFS (67 aa)) is the DRBM 2 domain. Residues Arg-612 and Arg-617 each carry the asymmetric dimethylarginine modification.

In terms of assembly, interacts with EIF2AK2. Associates with microtubules; it is unsure whether such interaction is direct or indirect.

The protein resides in the cytoplasm. Its function is as follows. Involved in spermatogenesis and sperm function. Plays a role in regulation of cell growth. Binds to double-stranded DNA and RNA. Binds most efficiently to poly(I:C) RNA than to poly(dI:dC) DNA. Binds also to single-stranded poly(G) RNA. Binds non-specifically to the mRNA PRM1 3'-UTR and adenovirus VA RNA. This Homo sapiens (Human) protein is Spermatid perinuclear RNA-binding protein (STRBP).